The chain runs to 136 residues: Histone H3 (136 aa).

Residues 1-43 (MARTKQTARKSTGGKAPRKQLASKAARKSAPSTGGVKKPHRYK) form a disordered region. K5 carries the post-translational modification N6,N6,N6-trimethyllysine; alternate. Residue K5 is modified to N6,N6-dimethyllysine; alternate. N6-methyllysine; alternate occurs at positions 5 and 10. K10 is subject to N6-acetyllysine; alternate. Residue S11 is modified to Phosphoserine. Residue K15 is modified to N6,N6-dimethyllysine; alternate. An N6-acetyllysine; alternate mark is found at K15, K19, K24, K28, and K37. N6-methyllysine; alternate is present on residues K19, K24, K28, and K37. 2 positions are modified to N6,N6,N6-trimethyllysine; alternate: K28 and K37. K28 and K37 each carry N6,N6-dimethyllysine; alternate. Residues K57 and K65 each carry the N6-acetyllysine modification. At K80 the chain carries N6,N6,N6-trimethyllysine; alternate. K80 bears the N6,N6-dimethyllysine; alternate mark. Position 80 is an N6-methyllysine; alternate (K80).

This sequence belongs to the histone H3 family. In terms of assembly, the nucleosome is a histone octamer containing two molecules each of H2A, H2B, H3 and H4 assembled in one H3-H4 heterotetramer and two H2A-H2B heterodimers. The octamer wraps approximately 147 bp of DNA. Post-translationally, phosphorylated to form H3S10ph. H3S10ph promotes subsequent H3K14ac formation and is required for transcriptional activation through TBP recruitment to the promoters. In terms of processing, mono-, di- and trimethylated by the COMPASS complex to form H3K4me1/2/3. H3K4me activates gene expression by regulating transcription elongation and plays a role in telomere length maintenance. H3K4me enrichment correlates with transcription levels, and occurs in a 5' to 3' gradient with H3K4me3 enrichment at the 5'-end of genes, shifting to H3K4me2 and then H3K4me1. Methylated by SET2 to form H3K36me. H3K36me represses gene expression. Methylated by DOT1 to form H3K79me. H3K79me is required for association of SIR proteins with telomeric regions and for telomeric silencing. The COMPASS-mediated formation of H3K4me2/3 and the DOT1-mediated formation of H3K79me require H2BK123ub1. Acetylation of histone H3 leads to transcriptional activation. H3K14ac formation by GCN5 is promoted by H3S10ph. H3K14ac can also be formed by ESA1. H3K56ac formation occurs predominantly in newly synthesized H3 molecules during G1, S and G2/M of the cell cycle and may be involved in DNA repair.

It localises to the nucleus. The protein localises to the chromosome. Its function is as follows. Core component of nucleosome. Nucleosomes wrap and compact DNA into chromatin, limiting DNA accessibility to the cellular machineries which require DNA as a template. Histones thereby play a central role in transcription regulation, DNA repair, DNA replication and chromosomal stability. DNA accessibility is regulated via a complex set of post-translational modifications of histones, also called histone code, and nucleosome remodeling. This Phaeosphaeria nodorum (strain SN15 / ATCC MYA-4574 / FGSC 10173) (Glume blotch fungus) protein is Histone H3 (HHT1).